The chain runs to 81 residues: Putative defensin-like protein 56 (81 aa).

The first 23 residues, 1 to 23 (MNITKAYVIFFLVVILTNSLSNS), serve as a signal peptide directing secretion. 4 cysteine pairs are disulfide-bonded: Cys-46–Cys-80, Cys-50–Cys-73, Cys-59–Cys-78, and Cys-63–Cys-79.

It belongs to the DEFL family.

The protein localises to the secreted. The chain is Putative defensin-like protein 56 from Arabidopsis thaliana (Mouse-ear cress).